The chain runs to 214 residues: Urease accessory protein UreG (214 aa).

Residue 23–30 (GPVGSGKT) coordinates GTP.

The protein belongs to the SIMIBI class G3E GTPase family. UreG subfamily. As to quaternary structure, homodimer. UreD, UreF and UreG form a complex that acts as a GTP-hydrolysis-dependent molecular chaperone, activating the urease apoprotein by helping to assemble the nickel containing metallocenter of UreC. The UreE protein probably delivers the nickel.

The protein resides in the cytoplasm. Its function is as follows. Facilitates the functional incorporation of the urease nickel metallocenter. This process requires GTP hydrolysis, probably effectuated by UreG. This chain is Urease accessory protein UreG, found in Bordetella bronchiseptica (strain ATCC BAA-588 / NCTC 13252 / RB50) (Alcaligenes bronchisepticus).